A 216-amino-acid polypeptide reads, in one-letter code: MHIVKIGGSLTYDAKPLLKALKNYAKENNKKIVIIPGGGEFANVVRKIDKALNISNSLSHKLAIKCMDLIGEVYAEIGYIKAYDTLFDLKREIEKEKIAILLPSKILLSTDIAEHSWAITSDSLSLYIGKLLDVREVIIATDVDGIYDKFPGGKLLNIINANDIKGLTSVDETFPILLKQFKMNAYVVNGRHPERVMDILEGKHNIYTKIVGIDKI.

Residues 5 to 9, G39, D142, 147 to 152, and G166 contribute to the ATP site; these read KIGGS and YDKFPG.

It belongs to the MfnE family. As to quaternary structure, homotrimer. Mg(2+) is required as a cofactor.

The enzyme catalyses [5-(aminomethyl)-3-furyl]methyl phosphate + ATP = [5-(aminomethyl)furan-3-yl]methyl diphosphate + ADP. It functions in the pathway cofactor biosynthesis; methanofuran biosynthesis. With respect to regulation, inhibited by EDTA. Its function is as follows. Catalyzes the formation of 5-(aminomethyl)-3-furanmethanol diphosphate (F1-PP) from 5-(aminomethyl)-3-furanmethanol phosphate (F1-P) and ATP. In vitro, can also act as an adenylate kinase that catalyzes the transfer of a phosphoryl group from ATP to AMP, generating two molecules of ADP. The polypeptide is [5-(aminomethyl)furan-3-yl]methyl phosphate kinase (Methanocaldococcus jannaschii (strain ATCC 43067 / DSM 2661 / JAL-1 / JCM 10045 / NBRC 100440) (Methanococcus jannaschii)).